The chain runs to 712 residues: Phosphatase and actin regulator 4 (712 aa).

Disordered regions lie at residues 1-22 (MGQA…GQPT) and 90-405 (RGLL…EVPK). The RPEL 1 repeat unit spans residues 72-97 (EVLERKISMRKPREELVKRGLLLEDS). Positions 114–124 (NGHTTLIGSTR) are enriched in polar residues. S125, S127, S140, and S156 each carry phosphoserine. Positions 136–152 (ERIASLRKPVPEEEPKK) are enriched in basic and acidic residues. A compositionally biased stretch (low complexity) spans 198 to 230 (ATSSGSLARPSSSASTTAITTAPAATMAATNPA). The span at 233–243 (VHSSGPPSQAP) shows a compositional bias: polar residues. Low complexity predominate over residues 245–267 (TLPAAPASTHTTATLSLTHTGPA). Phosphoserine is present on residues S282, S303, and S353. The span at 345–357 (SEPLLTPSSSPLP) shows a compositional bias: low complexity. Residues 358–371 (AHIPPEPPQSPPFP) are compositionally biased toward pro residues. A Phosphoserine modification is found at S436. Residue T441 is modified to Phosphothreonine. Phosphoserine occurs at positions 452, 462, 473, 524, 526, 567, and 600. Residues 507 to 557 (VIPKLPQCLQEEEEGKESDSDSEGPIQYRDEEDEDESHHSALANKVKRKDT) are disordered. Acidic residues predominate over residues 516–528 (QEEEEGKESDSDS). RPEL repeat units follow at residues 593–618 (NTLI…QPKN) and 631–656 (RRLT…RFNE). Residues 602–626 (RPTPEELEQRNILQPKNEADRQAEK) are disordered. S638 is subject to Phosphoserine.

Belongs to the phosphatase and actin regulator family. As to quaternary structure, binds PPP1CA and actin.

The protein localises to the cytoplasm. Its subcellular location is the cell projection. The protein resides in the lamellipodium. Functionally, regulator of protein phosphatase 1 (PP1) required for neural tube and optic fissure closure, and enteric neural crest cell (ENCCs) migration during development. Acts as an activator of PP1 by interacting with PPP1CA and preventing phosphorylation of PPP1CA at 'Thr-320'. During neural tube closure, localizes to the ventral neural tube and activates PP1, leading to down-regulate cell proliferation within cranial neural tissue and the neural retina. Also acts as a regulator of migration of enteric neural crest cells (ENCCs) by activating PP1, leading to dephosphorylation and subsequent activation of cofilin (COF1 or COF2) and repression of the integrin signaling through the RHO/ROCK pathway. This Bos taurus (Bovine) protein is Phosphatase and actin regulator 4 (PHACTR4).